The sequence spans 134 residues: Small ribosomal subunit protein uS11 (134 aa).

Belongs to the universal ribosomal protein uS11 family. As to quaternary structure, part of the 30S ribosomal subunit. Interacts with proteins S7 and S18. Binds to IF-3.

In terms of biological role, located on the platform of the 30S subunit, it bridges several disparate RNA helices of the 16S rRNA. Forms part of the Shine-Dalgarno cleft in the 70S ribosome. This is Small ribosomal subunit protein uS11 from Acidovorax ebreus (strain TPSY) (Diaphorobacter sp. (strain TPSY)).